The following is a 147-amino-acid chain: Large ribosomal subunit protein uL13 (147 aa).

This sequence belongs to the universal ribosomal protein uL13 family. In terms of assembly, part of the 50S ribosomal subunit.

Functionally, this protein is one of the early assembly proteins of the 50S ribosomal subunit, although it is not seen to bind rRNA by itself. It is important during the early stages of 50S assembly. The polypeptide is Large ribosomal subunit protein uL13 (Renibacterium salmoninarum (strain ATCC 33209 / DSM 20767 / JCM 11484 / NBRC 15589 / NCIMB 2235)).